The chain runs to 959 residues: Glycine dehydrogenase (decarboxylating) (959 aa).

K708 is modified (N6-(pyridoxal phosphate)lysine).

Belongs to the GcvP family. As to quaternary structure, the glycine cleavage system is composed of four proteins: P, T, L and H. Pyridoxal 5'-phosphate is required as a cofactor.

The enzyme catalyses N(6)-[(R)-lipoyl]-L-lysyl-[glycine-cleavage complex H protein] + glycine + H(+) = N(6)-[(R)-S(8)-aminomethyldihydrolipoyl]-L-lysyl-[glycine-cleavage complex H protein] + CO2. Its function is as follows. The glycine cleavage system catalyzes the degradation of glycine. The P protein binds the alpha-amino group of glycine through its pyridoxal phosphate cofactor; CO(2) is released and the remaining methylamine moiety is then transferred to the lipoamide cofactor of the H protein. This chain is Glycine dehydrogenase (decarboxylating), found in Yersinia pseudotuberculosis serotype O:1b (strain IP 31758).